A 92-amino-acid polypeptide reads, in one-letter code: Small ribosomal subunit protein bS20 (92 aa).

Positions 1-25 are disordered; it reads MANSAQARKRARQAAKANSHNSALR.

It belongs to the bacterial ribosomal protein bS20 family.

Its function is as follows. Binds directly to 16S ribosomal RNA. The polypeptide is Small ribosomal subunit protein bS20 (Paraburkholderia phytofirmans (strain DSM 17436 / LMG 22146 / PsJN) (Burkholderia phytofirmans)).